A 217-amino-acid chain; its full sequence is Large ribosomal subunit protein uL1 (217 aa).

It belongs to the universal ribosomal protein uL1 family. In terms of assembly, part of the 50S ribosomal subunit.

Binds directly to 23S rRNA. Probably involved in E site tRNA release. Its function is as follows. Protein L1 is also a translational repressor protein, it controls the translation of its operon by binding to its mRNA. The chain is Large ribosomal subunit protein uL1 from Thermoplasma volcanium (strain ATCC 51530 / DSM 4299 / JCM 9571 / NBRC 15438 / GSS1).